Reading from the N-terminus, the 499-residue chain is MPFSADSVTSLRQIADALAARSVSAEELAREYLARIEAGRALNAFVAVDPELTLAQARAADERRAQGQATPLTGVPIAHKDVFVTRGWKSTAGSKMLANYESPFDATVVERLAAAGMVTLGKTNMDEFAMGSSNENSFFGPVSNPWDTSRVPGGSSGGSAAAVAAGLAPAATGTDTGGSIRQPASFSGITGIKPTYGRVSRYGMIAFASSLDQGGPMAHSAEDCALLLNGMAGFDPKDSTSLTPELGGVTEDFTRLLGQPRAGATASQPLAGLRIGLPREYFGKGLSADVEQALRAALAEYEKLGATLVDVTLPKTELSIPVYYIIAPAEASSNLSRFDGVRYGHRAAQYGDLLDMYKKSRAEGFGPEVKRRIMVGTYVLSHGYYDAYYLQAQKIRRIIADDFQRAFTQCDVIMGPVAPTVAWKLGEKTADPVQMYLADIFTLSTSLAGLPGMSVPCGFGEGNMPVGLQLIGNYFDEAQLLQTAHAFQQATDWHLRRPA.

Active-site charge relay system residues include lysine 80 and serine 155. The Acyl-ester intermediate role is filled by serine 179.

The protein belongs to the amidase family. GatA subfamily. As to quaternary structure, heterotrimer of A, B and C subunits.

It catalyses the reaction L-glutamyl-tRNA(Gln) + L-glutamine + ATP + H2O = L-glutaminyl-tRNA(Gln) + L-glutamate + ADP + phosphate + H(+). Its function is as follows. Allows the formation of correctly charged Gln-tRNA(Gln) through the transamidation of misacylated Glu-tRNA(Gln) in organisms which lack glutaminyl-tRNA synthetase. The reaction takes place in the presence of glutamine and ATP through an activated gamma-phospho-Glu-tRNA(Gln). This is Glutamyl-tRNA(Gln) amidotransferase subunit A from Cupriavidus metallidurans (strain ATCC 43123 / DSM 2839 / NBRC 102507 / CH34) (Ralstonia metallidurans).